Reading from the N-terminus, the 225-residue chain is Uracil-DNA glycosylase (225 aa).

Aspartate 65 acts as the Proton acceptor in catalysis.

Belongs to the uracil-DNA glycosylase (UDG) superfamily. UNG family.

It is found in the cytoplasm. It catalyses the reaction Hydrolyzes single-stranded DNA or mismatched double-stranded DNA and polynucleotides, releasing free uracil.. Its function is as follows. Excises uracil residues from the DNA which can arise as a result of misincorporation of dUMP residues by DNA polymerase or due to deamination of cytosine. The protein is Uracil-DNA glycosylase of Clostridium perfringens (strain SM101 / Type A).